The chain runs to 154 residues: MVLKVKMGDIGVAKSPESIETLLGSCVAIILYDRGKKVGGVAHVMLPKSRNAAEKNPGKYADTALPELLDRMTKLGARKDKLTAKLAGGAAMFKCNSNTIDVGKKNIEASKEEVRKVGLRIASEDLGGDIGRTITLSLKDGSVIVRKGAELKTI.

This sequence belongs to the CheD family.

It catalyses the reaction L-glutaminyl-[protein] + H2O = L-glutamyl-[protein] + NH4(+). Probably deamidates glutamine residues to glutamate on methyl-accepting chemotaxis receptors (MCPs), playing an important role in chemotaxis. This Methanococcus maripaludis (strain C6 / ATCC BAA-1332) protein is Probable chemoreceptor glutamine deamidase CheD.